The chain runs to 187 residues: Protein GrpE (187 aa).

Over residues 1–15 (MKETKQEEMEVREDC) the composition is skewed to basic and acidic residues. A disordered region spans residues 1 to 40 (MKETKQEEMEVREDCESVDSNLEATVEEMESTKGTSEDLE).

It belongs to the GrpE family. In terms of assembly, homodimer.

The protein localises to the cytoplasm. Functionally, participates actively in the response to hyperosmotic and heat shock by preventing the aggregation of stress-denatured proteins, in association with DnaK and GrpE. It is the nucleotide exchange factor for DnaK and may function as a thermosensor. Unfolded proteins bind initially to DnaJ; upon interaction with the DnaJ-bound protein, DnaK hydrolyzes its bound ATP, resulting in the formation of a stable complex. GrpE releases ADP from DnaK; ATP binding to DnaK triggers the release of the substrate protein, thus completing the reaction cycle. Several rounds of ATP-dependent interactions between DnaJ, DnaK and GrpE are required for fully efficient folding. The chain is Protein GrpE from Alkaliphilus oremlandii (strain OhILAs) (Clostridium oremlandii (strain OhILAs)).